A 119-amino-acid polypeptide reads, in one-letter code: Ribonuclease P protein component (119 aa).

This sequence belongs to the RnpA family. As to quaternary structure, consists of a catalytic RNA component (M1 or rnpB) and a protein subunit.

The catalysed reaction is Endonucleolytic cleavage of RNA, removing 5'-extranucleotides from tRNA precursor.. RNaseP catalyzes the removal of the 5'-leader sequence from pre-tRNA to produce the mature 5'-terminus. It can also cleave other RNA substrates such as 4.5S RNA. The protein component plays an auxiliary but essential role in vivo by binding to the 5'-leader sequence and broadening the substrate specificity of the ribozyme. This chain is Ribonuclease P protein component, found in Aeromonas salmonicida (strain A449).